We begin with the raw amino-acid sequence, 793 residues long: von Willebrand factor A domain-containing protein 5A (793 aa).

The region spanning 1–131 (MEHHCGLITS…KVAVTLRYVQ (131 aa)) is the VIT domain. One can recognise a VWFA domain in the interval 281 to 469 (EFVFLMDRSG…FALQCAVDNI (189 aa)). The residue at position 622 (Y622) is a Phosphotyrosine.

Its function is as follows. May play a role in tumorigenesis as a tumor suppressor. Altered expression of this protein and disruption of the molecular pathway it is involved in may contribute directly to or modify tumorigenesis. This chain is von Willebrand factor A domain-containing protein 5A (Vwa5a), found in Mus musculus (Mouse).